A 472-amino-acid chain; its full sequence is Arabinose-proton symporter (472 aa).

The Cytoplasmic segment spans residues 1–29; it reads MVTINTESALTPRSLRDTRRMNMFVSVAA. A helical membrane pass occupies residues 30–50; that stretch reads AVAGLLFGLDIGVIAGALPFI. Topologically, residues 51-63 are periplasmic; the sequence is TDHFVLTSRLQEW. A helical transmembrane segment spans residues 64 to 84; it reads VVSSMMLGAAIGALFNGWLSF. Residues 85-91 are Cytoplasmic-facing; sequence RLGRKYS. The chain crosses the membrane as a helical span at residues 92-112; the sequence is LMAGAILFVLGSIGSAFATSV. Topologically, residues 113 to 114 are periplasmic; it reads EM. The chain crosses the membrane as a helical span at residues 115–135; that stretch reads LIAARVVLGIAVGIASYTAPL. Topologically, residues 136-154 are cytoplasmic; it reads YLSEMASENVRGKMISMYQ. Residues 155 to 175 traverse the membrane as a helical segment; sequence LMVTLGIVLAFLSDTAFSYSG. Residues 176–178 are Periplasmic-facing; sequence NWR. Residues 179-199 traverse the membrane as a helical segment; that stretch reads AMLGVLALPAVLLIILVVFLP. Topologically, residues 200-257 are cytoplasmic; sequence NSPRWLAEKGRHIEAEEVLRMLRDTSEKAREELNEIRESLKLKQGGWALFKINRNVRR. Residues 258–278 traverse the membrane as a helical segment; sequence AVFLGMLLQAMQQFTGMNIIM. The Periplasmic segment spans residues 279–297; the sequence is YYAPRIFKMAGFTTTEQQM. Residues 298–318 form a helical membrane-spanning segment; that stretch reads IATLVVGLTFMFATFIAVFTV. The Cytoplasmic portion of the chain corresponds to 319 to 325; sequence DKAGRKP. Residues 326 to 346 traverse the membrane as a helical segment; sequence ALKIGFSVMALGTLVLGYCLM. The Periplasmic portion of the chain corresponds to 347–361; sequence QFDNGTASSGLSWLS. Residues 362–382 form a helical membrane-spanning segment; sequence VGMTMMCIAGYAMSAAPVVWI. At 383-404 the chain is on the cytoplasmic side; that stretch reads LCSEIQPLKCRDFGITCSTTTN. The next 2 helical transmembrane spans lie at 405 to 425 and 426 to 446; these read WVSN…IGAA and GTFW…FWLI. At 447–472 the chain is on the cytoplasmic side; that stretch reads PETKNVTLEHIERKLMAGEKLRNIGV.

Belongs to the major facilitator superfamily. Sugar transporter (TC 2.A.1.1) family.

The protein localises to the cell inner membrane. It catalyses the reaction L-arabinose(in) + H(+)(in) = L-arabinose(out) + H(+)(out). In terms of biological role, uptake of L-arabinose across the cytoplasmic membrane with the concomitant transport of protons into the cell (symport system). The polypeptide is Arabinose-proton symporter (araE) (Escherichia coli O157:H7).